The chain runs to 134 residues: Syncollin (134 aa).

A signal peptide spans 1–21 (MSPLCLLLLALALVAVPGARG).

Monomer and homooligomer; most probably hexameric. Interacts with GP2. According to PubMed:10753942 interaction with syntaxins shown in PubMed:9244306 is physiologically questionable. In terms of processing, contains intrachain disulfide bonds. In terms of tissue distribution, specifically expressed in pancreas and also detected in secretory granules of parotid gland (at protein level). Expressed in pancreas, spleen, small intestine, lung and neutrophilic granulocytes (at protein level). Expressed by epithelial cells in duodenum and colon.

It is found in the zymogen granule membrane. The protein resides in the zymogen granule lumen. Functionally, functions in exocytosis in pancreatic acinar cells regulating the fusion of zymogen granules with each other. May have a pore-forming activity on membranes and regulate exocytosis in other exocrine tissues. This chain is Syncollin (Sycn), found in Rattus norvegicus (Rat).